Reading from the N-terminus, the 832-residue chain is uncharacterized protein (832 aa).

This is an uncharacterized protein from Rickettsia bellii (strain RML369-C).